A 285-amino-acid chain; its full sequence is Bifunctional protein FolD (285 aa).

NADP(+)-binding positions include 165–167 (GRS), serine 190, and isoleucine 231.

Belongs to the tetrahydrofolate dehydrogenase/cyclohydrolase family. In terms of assembly, homodimer.

It catalyses the reaction (6R)-5,10-methylene-5,6,7,8-tetrahydrofolate + NADP(+) = (6R)-5,10-methenyltetrahydrofolate + NADPH. It carries out the reaction (6R)-5,10-methenyltetrahydrofolate + H2O = (6R)-10-formyltetrahydrofolate + H(+). It functions in the pathway one-carbon metabolism; tetrahydrofolate interconversion. Catalyzes the oxidation of 5,10-methylenetetrahydrofolate to 5,10-methenyltetrahydrofolate and then the hydrolysis of 5,10-methenyltetrahydrofolate to 10-formyltetrahydrofolate. The protein is Bifunctional protein FolD of Verminephrobacter eiseniae (strain EF01-2).